The chain runs to 158 residues: GTP-dependent dephospho-CoA kinase (158 aa).

Asp-35, Val-36, Asp-54, Lys-56, Glu-109, and Asp-132 together coordinate GTP.

It belongs to the GTP-dependent DPCK family.

The catalysed reaction is 3'-dephospho-CoA + GTP = GDP + CoA + H(+). It functions in the pathway cofactor biosynthesis; coenzyme A biosynthesis. In terms of biological role, catalyzes the GTP-dependent phosphorylation of the 3'-hydroxyl group of dephosphocoenzyme A to form coenzyme A (CoA). The protein is GTP-dependent dephospho-CoA kinase of Methanococcus maripaludis (strain C5 / ATCC BAA-1333).